The primary structure comprises 256 residues: DNA repair protein RecO (256 aa).

Belongs to the RecO family.

Involved in DNA repair and RecF pathway recombination. This Desulforamulus reducens (strain ATCC BAA-1160 / DSM 100696 / MI-1) (Desulfotomaculum reducens) protein is DNA repair protein RecO.